The chain runs to 115 residues: Translation initiation factor 1A 2 (115 aa).

The segment at 1-34 (MANYRSTIRHRNSGSRKSVSGDTHEVTRVRTPQK) is disordered. A compositionally biased stretch (basic and acidic residues) spans 22–34 (DTHEVTRVRTPQK). The S1-like domain occupies 27-101 (TRVRTPQKDR…SKADVTWKYT (75 aa)).

It belongs to the eIF-1A family.

In terms of biological role, seems to be required for maximal rate of protein biosynthesis. Enhances ribosome dissociation into subunits and stabilizes the binding of the initiator Met-tRNA(I) to 40 S ribosomal subunits. The polypeptide is Translation initiation factor 1A 2 (Methanosarcina barkeri (strain Fusaro / DSM 804)).